We begin with the raw amino-acid sequence, 259 residues long: Hydroxyethylthiazole kinase 1 (259 aa).

Met38 lines the substrate pocket. ATP is bound by residues Arg113 and Ser158. Gly185 lines the substrate pocket.

The protein belongs to the Thz kinase family. Mg(2+) serves as cofactor.

It carries out the reaction 5-(2-hydroxyethyl)-4-methylthiazole + ATP = 4-methyl-5-(2-phosphooxyethyl)-thiazole + ADP + H(+). The protein operates within cofactor biosynthesis; thiamine diphosphate biosynthesis; 4-methyl-5-(2-phosphoethyl)-thiazole from 5-(2-hydroxyethyl)-4-methylthiazole: step 1/1. In terms of biological role, catalyzes the phosphorylation of the hydroxyl group of 4-methyl-5-beta-hydroxyethylthiazole (THZ). This Leuconostoc mesenteroides subsp. mesenteroides (strain ATCC 8293 / DSM 20343 / BCRC 11652 / CCM 1803 / JCM 6124 / NCDO 523 / NBRC 100496 / NCIMB 8023 / NCTC 12954 / NRRL B-1118 / 37Y) protein is Hydroxyethylthiazole kinase 1.